Reading from the N-terminus, the 199-residue chain is dITP/XTP pyrophosphatase (199 aa).

8 to 13 (TSNKNK) lines the substrate pocket. Residues Glu-40 and Asp-68 each coordinate Mg(2+). Asp-68 acts as the Proton acceptor in catalysis. Residues Ser-69, 154–157 (FGYD), Lys-177, and 182–183 (HR) contribute to the substrate site.

It belongs to the HAM1 NTPase family. As to quaternary structure, homodimer. The cofactor is Mg(2+).

It carries out the reaction XTP + H2O = XMP + diphosphate + H(+). It catalyses the reaction dITP + H2O = dIMP + diphosphate + H(+). The catalysed reaction is ITP + H2O = IMP + diphosphate + H(+). Functionally, pyrophosphatase that catalyzes the hydrolysis of nucleoside triphosphates to their monophosphate derivatives, with a high preference for the non-canonical purine nucleotides XTP (xanthosine triphosphate), dITP (deoxyinosine triphosphate) and ITP. Seems to function as a house-cleaning enzyme that removes non-canonical purine nucleotides from the nucleotide pool, thus preventing their incorporation into DNA/RNA and avoiding chromosomal lesions. The chain is dITP/XTP pyrophosphatase from Wigglesworthia glossinidia brevipalpis.